A 416-amino-acid polypeptide reads, in one-letter code: D-amino acid dehydrogenase (416 aa).

3-17 (VIVLGAGIIGVTSAY) contributes to the FAD binding site.

It belongs to the DadA oxidoreductase family. It depends on FAD as a cofactor.

The enzyme catalyses a D-alpha-amino acid + A + H2O = a 2-oxocarboxylate + AH2 + NH4(+). It functions in the pathway amino-acid degradation; D-alanine degradation; NH(3) and pyruvate from D-alanine: step 1/1. Oxidative deamination of D-amino acids. The protein is D-amino acid dehydrogenase of Sinorhizobium medicae (strain WSM419) (Ensifer medicae).